We begin with the raw amino-acid sequence, 118 residues long: Small ribosomal subunit protein uS13 (118 aa).

The interval 94 to 118 (GLPVRGQRTKTNARTRKGPCKPIKK) is disordered.

Belongs to the universal ribosomal protein uS13 family. Part of the 30S ribosomal subunit. Forms a loose heterodimer with protein S19. Forms two bridges to the 50S subunit in the 70S ribosome.

Functionally, located at the top of the head of the 30S subunit, it contacts several helices of the 16S rRNA. In the 70S ribosome it contacts the 23S rRNA (bridge B1a) and protein L5 of the 50S subunit (bridge B1b), connecting the 2 subunits; these bridges are implicated in subunit movement. Contacts the tRNAs in the A and P-sites. This Salmonella typhi protein is Small ribosomal subunit protein uS13.